Reading from the N-terminus, the 164-residue chain is Leucine-rich single-pass membrane protein 2 (164 aa).

A helical transmembrane segment spans residues 97–117 (GFLLLLALLVLTCLVLALLAV).

The protein resides in the membrane. This chain is Leucine-rich single-pass membrane protein 2 (LSMEM2), found in Homo sapiens (Human).